We begin with the raw amino-acid sequence, 327 residues long: Cell surface glycoprotein CD200 receptor 1 (327 aa).

A signal peptide spans 1–23 (MLCFWRTSHVAVLLIWGVFAAES). The Extracellular portion of the chain corresponds to 24 to 239 (SCPDKNQTMQ…GRGGDQLLGS (216 aa)). An Ig-like V-type domain is found at 26-145 (PDKNQTMQNN…GNFQNIYDLQ (120 aa)). N-linked (GlcNAc...) asparagine glycans are attached at residues N29, N34, N43, N96, N159, N187, N192, and N222. Intrachain disulfides connect C58–C129 and C81–C97. The Ig-like C2-type domain maps to 147-226 (LVPPEVTHFP…HLTTGNQSLS (80 aa)). Cystine bridges form between C164–C213 and C183–C201. Residues 240-260 (YIQYIIPSIIILIIIGCICLL) traverse the membrane as a helical segment. The Cytoplasmic segment spans residues 261-327 (KISGCRKCKL…DCLTLSAMGI (67 aa)).

Belongs to the CD200R family. CD200 and CD200R1 interact via their respective N-terminal Ig-like domains. Post-translationally, phosphorylated on tyrosine residues. In terms of processing, highly N-glycosylated. As to expression, restricted to cells of the myeloid lineage.

It is found in the cell membrane. Its function is as follows. Inhibitory receptor for the CD200/OX2 cell surface glycoprotein. Limits inflammation by inhibiting the expression of pro-inflammatory molecules including TNF-alpha, interferons, and inducible nitric oxide synthase (iNOS) in response to selected stimuli. The chain is Cell surface glycoprotein CD200 receptor 1 (Cd200r1) from Rattus norvegicus (Rat).